The sequence spans 1041 residues: Nuclear pore complex protein NUP98A (1041 aa).

The span at 1-34 (MFGSSNPFGQSSGTSPFGSQSLFGQTSNTSSNNP) shows a compositional bias: polar residues. The disordered stretch occupies residues 1 to 44 (MFGSSNPFGQSSGTSPFGSQSLFGQTSNTSSNNPFAPATPFGTS). A run of 44 repeats spans residues 2-3 (FG), 8-9 (FG), 17-18 (FG), 23-24 (FG), 41-42 (FG), 56-57 (FG), 64-65 (FG), 79-80 (FG), 87-88 (FG), 94-95 (FG), 103-104 (FG), 109-110 (FG), 124-125 (FG), 135-136 (FG), 140-141 (FG), 146-147 (FG), 154-155 (FG), 162-163 (FG), 170-171 (FG), 178-179 (FG), 186-187 (FG), 194-195 (FG), 202-203 (FG), 210-211 (FG), 217-218 (FG), 222-223 (FG), 228-229 (FG), 236-237 (FG), 244-245 (FG), 252-253 (FG), 260-261 (FG), 268-269 (FG), 276-277 (FG), 284-285 (FG), 294-295 (FG), 300-301 (FG), 307-308 (FG), 312-313 (FG), 319-320 (FG), 329-330 (FG), 334-335 (FG), 339-340 (FG), 411-412 (FG), and 427-428 (FG). The segment at 2 to 677 (FGSSNPFGQS…QPVAVTNPFG (676 aa)) is 65 X 2 AA repeats of F-G. The segment at 98–171 (PASSPFGGSS…FGATSTPSFG (74 aa)) is disordered. Polar residues predominate over residues 117–171 (STPQSNPFGNSTQQSQPAFGNTSFGSSTPFGATNTPAFGAPSTPSFGATSTPSFG). Disordered regions lie at residues 315–347 (TPSP…GGSR) and 392–447 (QRGD…TNPF). Over residues 430-447 (TSANPTNPFSSSTSTNPF) the composition is skewed to low complexity. Repeat copies occupy residues 459–460 (FG), 466–467 (FG), 471–472 (FG), 480–481 (FG), 491–492 (FG), 497–498 (FG), 506–507 (FG), 514–515 (FG), 521–522 (FG), 533–534 (FG), 555–556 (FG), 562–563 (FG), 565–566 (FG), 573–574 (FG), 586–587 (FG), 604–605 (FG), 627–628 (FG), 632–633 (FG), 650–651 (FG), 655–656 (FG), and 676–677 (FG). Low complexity predominate over residues 517–526 (SSSIFGSAPG). The segment at 517 to 560 (SSSIFGSAPGQGATPAFGNSQPSTLFNSTPSTGQTGSAFGQTGS) is disordered. Polar residues predominate over residues 533–560 (FGNSQPSTLFNSTPSTGQTGSAFGQTGS). The segment at 734–860 (KYRPGENGPK…KERPYKTLSG (127 aa)) is disordered. Basic and acidic residues predominate over residues 782-793 (SRDKSILPKEQR). Residues 831 to 846 (TSVNANQKPNGTTRSD) show a composition bias toward polar residues. In terms of domain architecture, Peptidase S59 spans 885–1027 (QSDYFTEPRI…GEWKFRVEHF (143 aa)).

It belongs to the nucleoporin GLFG family. In terms of assembly, part of the nuclear pore complex (NPC). The NPC has an eight-fold symmetrical structure comprising a central transport channel and two rings, the cytoplasmic and nuclear rings, to which eight filaments are attached. The cytoplasmic filaments have loose ends, while the nuclear filaments are joined in a distal ring, forming a nuclear basket. NPCs are highly dynamic in configuration and composition, and can be devided in 3 subcomplexes, the NUP62 subcomplex, the NUP107-160 subcomplex and the NUP93 subcomplex, containing approximately 30 different nucleoporin proteins.

It is found in the nucleus. The protein localises to the nuclear pore complex. In Arabidopsis thaliana (Mouse-ear cress), this protein is Nuclear pore complex protein NUP98A.